The following is a 127-amino-acid chain: Large ribosomal subunit protein bL19 (127 aa).

The protein belongs to the bacterial ribosomal protein bL19 family.

Its function is as follows. This protein is located at the 30S-50S ribosomal subunit interface and may play a role in the structure and function of the aminoacyl-tRNA binding site. The chain is Large ribosomal subunit protein bL19 from Synechococcus sp. (strain JA-3-3Ab) (Cyanobacteria bacterium Yellowstone A-Prime).